Reading from the N-terminus, the 216-residue chain is Phosphatidylserine decarboxylase proenzyme (216 aa).

Serine 183 (schiff-base intermediate with substrate; via pyruvic acid) is an active-site residue. A Pyruvic acid (Ser); by autocatalysis modification is found at serine 183.

It belongs to the phosphatidylserine decarboxylase family. PSD-A subfamily. As to quaternary structure, heterodimer of a large membrane-associated beta subunit and a small pyruvoyl-containing alpha subunit. The cofactor is pyruvate. In terms of processing, is synthesized initially as an inactive proenzyme. Formation of the active enzyme involves a self-maturation process in which the active site pyruvoyl group is generated from an internal serine residue via an autocatalytic post-translational modification. Two non-identical subunits are generated from the proenzyme in this reaction, and the pyruvate is formed at the N-terminus of the alpha chain, which is derived from the carboxyl end of the proenzyme. The post-translation cleavage follows an unusual pathway, termed non-hydrolytic serinolysis, in which the side chain hydroxyl group of the serine supplies its oxygen atom to form the C-terminus of the beta chain, while the remainder of the serine residue undergoes an oxidative deamination to produce ammonia and the pyruvoyl prosthetic group on the alpha chain.

The protein localises to the cell membrane. The enzyme catalyses a 1,2-diacyl-sn-glycero-3-phospho-L-serine + H(+) = a 1,2-diacyl-sn-glycero-3-phosphoethanolamine + CO2. It participates in phospholipid metabolism; phosphatidylethanolamine biosynthesis; phosphatidylethanolamine from CDP-diacylglycerol: step 2/2. Catalyzes the formation of phosphatidylethanolamine (PtdEtn) from phosphatidylserine (PtdSer). The protein is Phosphatidylserine decarboxylase proenzyme of Chlorobaculum tepidum (strain ATCC 49652 / DSM 12025 / NBRC 103806 / TLS) (Chlorobium tepidum).